A 527-amino-acid polypeptide reads, in one-letter code: Eukaryotic translation initiation factor 2 subunit gamma (527 aa).

Residues 1–83 (MSDLQDQEPS…GLPEQPLNPD (83 aa)) are disordered. A Phosphothreonine modification is found at Thr-60. The 210-residue stretch at 98–307 (QATINIGTIG…IVKTIPVPPR (210 aa)) folds into the tr-type G domain. A G1 region spans residues 107 to 114 (GHVAHGKS). Residue 110–115 (AHGKST) participates in GTP binding. Positions 135 to 139 (NITIK) are G2. The segment at 193–196 (DCPG) is G3. 249-252 (NKVD) serves as a coordination point for GTP. The G4 stretch occupies residues 249-252 (NKVD). Ser-258 bears the Phosphoserine mark. 284–286 (SAQ) serves as a coordination point for GTP. A G5 region spans residues 284 to 286 (SAQ). Positions 515–527 (ATIKKGTTLEPIA) are interacts with CDC123.

Belongs to the TRAFAC class translation factor GTPase superfamily. Classic translation factor GTPase family. EIF2G subfamily. In terms of assembly, eukaryotic translation initiation factor 2 eIF2 is a heterotrimeric complex composed of an alpha, a beta and a gamma subunit. The factors eIF-1, eIF-1A, eIF-2, eIF-3, TIF5/eIF-5 and methionyl-tRNAi form a multifactor complex (MFC) that may bind to the 40S ribosome. Interacts (via C-terminus) with CDC123; the interaction is direct. Interacts with GCD1. Interacts with the eIF2B complex subunits GCD6 and GCD7. Interacts with methionyl-initiator methionine tRNA.

It localises to the cytoplasm. The protein localises to the cytosol. The enzyme catalyses GTP + H2O = GDP + phosphate + H(+). Its function is as follows. As a subunit of eukaryotic initiation factor 2 eIF2, involved in the early steps of protein synthesis. In the presence of GTP, eIF-2 forms a ternary complex with initiator tRNA Met-tRNAi and then recruits the 40S ribosomal complex and initiation factors eIF-1, eIF-1A and eIF-3 to form the 43S pre-initiation complex (43S PIC), a step that determines the rate of protein translation. The 43S PIC binds to mRNA and scans downstream to the initiation codon, where it forms a 48S initiation complex by codon-anticodon base pairing. This leads to the displacement of eIF-1 to allow GTPase-activating protein (GAP) eIF-5-mediated hydrolysis of eIF2-bound GTP. Hydrolysis of GTP and release of Pi, which makes GTP hydrolysis irreversible, causes the release of the eIF-2-GDP binary complex from the 40S subunit, an event that is essential for the subsequent joining of the 60S ribosomal subunit to form an elongation-competent 80S ribosome. In order for eIF-2 to recycle and catalyze another round of initiation, the GDP bound to eIF-2 must be exchanged with GTP by way of a reaction catalyzed by GDP-GTP exchange factor (GEF) eIF-2B. The polypeptide is Eukaryotic translation initiation factor 2 subunit gamma (GCD11) (Saccharomyces cerevisiae (strain ATCC 204508 / S288c) (Baker's yeast)).